A 397-amino-acid polypeptide reads, in one-letter code: Subtilisin-like serine protease Pen ch 13.0101 (397 aa).

An N-terminal signal peptide occupies residues 1 to 19; the sequence is MGFLKVLATSLATLAVVDA. The propeptide at 20-115 is removed in mature form; sequence GTLLTASNTD…IEPDMIVNAT (96 aa). The Inhibitor I9 domain maps to 35 to 113; sequence SYIVVMNDDV…KYIEPDMIVN (79 aa). N-linked (GlcNAc...) asparagine glycosylation occurs at asparagine 113. The Peptidase S8 domain occupies 125-397; the sequence is SWGLARISSK…SKLLYNGINV (273 aa). Catalysis depends on charge relay system residues aspartate 157 and histidine 188. Asparagine 249 and asparagine 284 each carry an N-linked (GlcNAc...) asparagine glycan. The Charge relay system role is filled by serine 343.

This sequence belongs to the peptidase S8 family.

The protein resides in the secreted. Functionally, serine protease. The chain is Subtilisin-like serine protease Pen ch 13.0101 from Penicillium rubens.